The following is a 467-amino-acid chain: Chromosomal replication initiator protein DnaA (467 aa).

The segment at 1–80 (MTSELWHQCL…APRISLKIGS (80 aa)) is domain I, interacts with DnaA modulators. The tract at residues 80–130 (SITGNSKGQQASKDSAVGATRTTAPSRPVIADVAPSGERNVTVEGAIKHES) is domain II. Residues 131-347 (YLNPTFTFET…GALKLVIANA (217 aa)) form a domain III, AAA+ region region. ATP contacts are provided by G175, G177, K178, and T179. Residues 348 to 467 (HFTGQEITPA…YQNFMRMLTS (120 aa)) are domain IV, binds dsDNA.

Belongs to the DnaA family. In terms of assembly, oligomerizes as a right-handed, spiral filament on DNA at oriC.

It is found in the cytoplasm. Functionally, plays an essential role in the initiation and regulation of chromosomal replication. ATP-DnaA binds to the origin of replication (oriC) to initiate formation of the DNA replication initiation complex once per cell cycle. Binds the DnaA box (a 9 base pair repeat at the origin) and separates the double-stranded (ds)DNA. Forms a right-handed helical filament on oriC DNA; dsDNA binds to the exterior of the filament while single-stranded (ss)DNA is stabiized in the filament's interior. The ATP-DnaA-oriC complex binds and stabilizes one strand of the AT-rich DNA unwinding element (DUE), permitting loading of DNA polymerase. After initiation quickly degrades to an ADP-DnaA complex that is not apt for DNA replication. Binds acidic phospholipids. This chain is Chromosomal replication initiator protein DnaA, found in Hahella chejuensis (strain KCTC 2396).